The primary structure comprises 680 residues: Lipase 1 (680 aa).

The N-terminal stretch at 1-34 (MKSQNKYSIRKFSVGASSILIATLLFLSGGQAQA) is a signal peptide. Residues 35–290 (AEKQVNMGNS…AKAKGDQTNK (256 aa)) constitute a propeptide that is removed on maturation. 2 disordered regions span residues 39-58 (VNMGNSQEDTVTAQSIGDQQ) and 82-260 (KNLH…KNGL). Polar residues predominate over residues 40-58 (NMGNSQEDTVTAQSIGDQQ). The segment covering 84 to 112 (LHNDKTISEENHRKTDDLNKDQLKDDKKS) has biased composition (basic and acidic residues). Composition is skewed to polar residues over residues 162-193 (SQDLNANNNLPSQSRTKVSPSLNKSDQTSQRE) and 204-223 (QPQQKNQANDKITDHNFNNE). A compositionally biased stretch (basic and acidic residues) spans 224-234 (QEVKPQKDEKT). Residues 235–246 (LSVSDLKNNQKS) are compositionally biased toward polar residues. The active-site Nucleophile is serine 408. The active-site Charge relay system is the aspartate 600. A Ca(2+)-binding site is contributed by aspartate 638. Residue histidine 639 is the Charge relay system of the active site. Ca(2+) contacts are provided by aspartate 641, aspartate 646, and aspartate 649.

Belongs to the AB hydrolase superfamily. Lipase family.

It localises to the secreted. The enzyme catalyses a triacylglycerol + H2O = a diacylglycerol + a fatty acid + H(+). The sequence is that of Lipase 1 (lip1) from Staphylococcus aureus (strain MRSA252).